Here is a 206-residue protein sequence, read N- to C-terminus: Imidazoleglycerol-phosphate dehydratase (206 aa).

It belongs to the imidazoleglycerol-phosphate dehydratase family.

The protein resides in the cytoplasm. The catalysed reaction is D-erythro-1-(imidazol-4-yl)glycerol 3-phosphate = 3-(imidazol-4-yl)-2-oxopropyl phosphate + H2O. The protein operates within amino-acid biosynthesis; L-histidine biosynthesis; L-histidine from 5-phospho-alpha-D-ribose 1-diphosphate: step 6/9. The sequence is that of Imidazoleglycerol-phosphate dehydratase from Leptospira interrogans serogroup Icterohaemorrhagiae serovar copenhageni (strain Fiocruz L1-130).